Consider the following 405-residue polypeptide: Imidazolonepropionase (405 aa).

Positions 72 and 74 each coordinate Fe(3+). 2 residues coordinate Zn(2+): His72 and His74. Residues Arg81, Tyr144, and His177 each coordinate 4-imidazolone-5-propanoate. Tyr144 serves as a coordination point for N-formimidoyl-L-glutamate. His242 contributes to the Fe(3+) binding site. Zn(2+) is bound at residue His242. 4-imidazolone-5-propanoate is bound at residue Gln245. Position 317 (Asp317) interacts with Fe(3+). Zn(2+) is bound at residue Asp317. Asn319 and Gly321 together coordinate N-formimidoyl-L-glutamate. Residue Thr322 coordinates 4-imidazolone-5-propanoate.

Belongs to the metallo-dependent hydrolases superfamily. HutI family. Requires Zn(2+) as cofactor. Fe(3+) is required as a cofactor.

The protein resides in the cytoplasm. The enzyme catalyses 4-imidazolone-5-propanoate + H2O = N-formimidoyl-L-glutamate. Its pathway is amino-acid degradation; L-histidine degradation into L-glutamate; N-formimidoyl-L-glutamate from L-histidine: step 3/3. Its function is as follows. Catalyzes the hydrolytic cleavage of the carbon-nitrogen bond in imidazolone-5-propanoate to yield N-formimidoyl-L-glutamate. It is the third step in the universal histidine degradation pathway. The protein is Imidazolonepropionase of Klebsiella pneumoniae (strain 342).